We begin with the raw amino-acid sequence, 52 residues long: uncharacterized protein (52 aa).

Residues 21–40 (VAMNSYVELLFLSVPLIHIF) traverse the membrane as a helical segment.

It is found in the cell membrane. This is an uncharacterized protein from Bacillus subtilis (strain 168).